Reading from the N-terminus, the 977-residue chain is Mineralocorticoid receptor (977 aa).

Residues methionine 1–tryptophan 19 show a composition bias toward basic and acidic residues. 2 disordered regions span residues methionine 1–threonine 37 and glutamine 231–proline 288. Residues methionine 1–isoleucine 601 are modulating. Over residues glutamine 231–asparagine 243 the composition is skewed to polar residues. A phosphoserine mark is found at serine 250, serine 259, serine 283, serine 287, and serine 299. Residues serine 259–proline 288 are compositionally biased toward low complexity. Disordered stretches follow at residues asparagine 305–alanine 327 and serine 344–histidine 368. 8 residues coordinate Zn(2+): cysteine 602, cysteine 605, cysteine 619, cysteine 622, cysteine 638, cysteine 644, cysteine 654, and cysteine 657. 2 consecutive NR C4-type zinc fingers follow at residues cysteine 602–cysteine 622 and cysteine 638–cysteine 662. The segment at residues cysteine 602–methionine 667 is a DNA-binding region (nuclear receptor). Residues asparagine 668–proline 718 form a hinge region. The segment at glycine 682 to tyrosine 703 is disordered. Positions glutamine 719–isoleucine 957 constitute an NR LBD domain. The 21-hydroxyprogesterone site is built by asparagine 763 and glutamine 769. Asparagine 763 and glutamine 769 together coordinate aldosterone. Progesterone is bound by residues asparagine 763 and glutamine 769. The segment at lysine 775–lysine 778 is important for coactivator binding. 21-hydroxyprogesterone is bound by residues arginine 810 and threonine 938. Positions 810 and 938 each coordinate aldosterone. Progesterone-binding residues include arginine 810 and threonine 938.

This sequence belongs to the nuclear hormone receptor family. NR3 subfamily.

Its subcellular location is the cytoplasm. The protein localises to the nucleus. Functionally, receptor for both mineralocorticoids (MC) such as aldosterone and glucocorticoids (GC) such as corticosterone or cortisol. Binds to mineralocorticoid response elements (MRE) and transactivates target genes. The effect of MC is to increase ion and water transport and thus raise extracellular fluid volume and blood pressure and lower potassium levels. This chain is Mineralocorticoid receptor (NR3C2), found in Tupaia belangeri (Common tree shrew).